The following is a 434-amino-acid chain: Prenyltransferase fogH (434 aa).

Glu-86 contacts L-tryptophan. 5 residues coordinate substrate: Arg-101, Arg-248, Lys-250, Tyr-252, and Tyr-346.

This sequence belongs to the tryptophan dimethylallyltransferase family.

The protein operates within secondary metabolite biosynthesis. Prenyltransferase; part of the gene cluster that mediates the biosynthesis of flavoglaucin and congeners (including aspergin, dihydroauroglaucin and auroglaucin), prenylated salicylaldehyde derivatives carrying a saturated or an unsaturated C-7 side chain. The PKS fogA releases the carboxylic acid (8E,10E,12E)-3,5,7-trihydroxytetradeca-8,10,12-trienoic acid as its product, as well as derivatives with one and two double bonds. FogA is indeed able to reduce the initial triketide, thus being at least partially responsible for the differently saturated heptyl side chains of flavoglaucin congeners. The oxidoreductases fogB, fogC and fogD modify the nascent polyketide in fogA-bound form and, together, fogA, fogB, fogC and fogD are necessary for the formation of the aromatic core and the cyclized PKS products are released as salicyl alcohols. In particular, fogB is responsible for oxidation of a hydroxyl group or reduction of remaining double bond(s) at the C-7 residue whereas fogD is probably involved in the reductive release of the modified PKS products. The cytochrome P450 monooxygenase fogE is then responsible for the hydroxylation at C-3 of the benzene ring. The fogE products are substrates of the prenyltransferase fogH and the prenylated benzyl alcohols are subsequently oxidized by the fogF to produce the final aryl aldehydes flavoglaucin and congeners. The short-chain dehydrogenase fogG does not seem to be involved in the biosynthesis of the prenylated salicylaldehyde derivatives. This is Prenyltransferase fogH from Aspergillus ruber (strain CBS 135680).